We begin with the raw amino-acid sequence, 365 residues long: Chorismate synthase (365 aa).

The segment at 41 to 60 is disordered; sequence MQHDLDRRRPGTSRYTTARR. NADP(+) contacts are provided by Arg-48 and Arg-54. Residues 125 to 127, 238 to 239, Gly-278, 293 to 297, and Arg-319 each bind FMN; these read RSS, NA, and KPTSS.

Belongs to the chorismate synthase family. As to quaternary structure, homotetramer. The cofactor is FMNH2.

The enzyme catalyses 5-O-(1-carboxyvinyl)-3-phosphoshikimate = chorismate + phosphate. It functions in the pathway metabolic intermediate biosynthesis; chorismate biosynthesis; chorismate from D-erythrose 4-phosphate and phosphoenolpyruvate: step 7/7. In terms of biological role, catalyzes the anti-1,4-elimination of the C-3 phosphate and the C-6 proR hydrogen from 5-enolpyruvylshikimate-3-phosphate (EPSP) to yield chorismate, which is the branch point compound that serves as the starting substrate for the three terminal pathways of aromatic amino acid biosynthesis. This reaction introduces a second double bond into the aromatic ring system. The chain is Chorismate synthase from Shewanella amazonensis (strain ATCC BAA-1098 / SB2B).